The chain runs to 1453 residues: ABC transporter G family member 34 (1453 aa).

Residues 1–24 (MLGRDEDLVRTMSGRGSLGSTSHR) are disordered. The region spanning 173–446 (LGLFHLLPSK…FEYMGFKCPE (274 aa)) is the ABC transporter 1 domain. 206–213 (GPPSSGKT) lines the ATP pocket. The ABC transmembrane type-2 1 domain maps to 524 to 737 (DLFKACFDRE…GQTALVINEF (214 aa)). The next 6 helical transmembrane spans lie at 542 to 562 (FVYV…MTVY), 582 to 602 (LFFS…FTVM), 621 to 641 (FALP…VIWI), 661 to 681 (LLAY…LGAL), 687 to 707 (IANS…GFII), and 773 to 793 (FWIC…CYII). The ABC transporter 2 domain occupies 852 to 1105 (LAFNNVNYYV…LVEYFEAIEG (254 aa)). ATP is bound at residue 897-904 (GVSGAGKT). The region spanning 1177 to 1391 (TQTKACFWKM…TLYGIITSQV (215 aa)) is the ABC transmembrane type-2 2 domain. 7 consecutive transmembrane segments (helical) span residues 1196 to 1216 (YNAI…LLFW), 1230 to 1250 (NFFG…AATV), 1289 to 1309 (IQTG…WTVV), 1311 to 1331 (FFWF…YGMM), 1341 to 1361 (IAGI…GFLI), 1366 to 1386 (IPIW…LYGI), and 1422 to 1442 (FLPV…FAFA).

The protein belongs to the ABC transporter superfamily. ABCG family. PDR (TC 3.A.1.205) subfamily. Expressed in roots at low levels.

It localises to the membrane. In terms of biological role, may be a general defense protein. In Arabidopsis thaliana (Mouse-ear cress), this protein is ABC transporter G family member 34 (ABCG34).